The primary structure comprises 251 residues: 3-deoxy-manno-octulosonate cytidylyltransferase (251 aa).

This sequence belongs to the KdsB family.

It is found in the cytoplasm. The enzyme catalyses 3-deoxy-alpha-D-manno-oct-2-ulosonate + CTP = CMP-3-deoxy-beta-D-manno-octulosonate + diphosphate. The protein operates within nucleotide-sugar biosynthesis; CMP-3-deoxy-D-manno-octulosonate biosynthesis; CMP-3-deoxy-D-manno-octulosonate from 3-deoxy-D-manno-octulosonate and CTP: step 1/1. Its pathway is bacterial outer membrane biogenesis; lipopolysaccharide biosynthesis. Its function is as follows. Activates KDO (a required 8-carbon sugar) for incorporation into bacterial lipopolysaccharide in Gram-negative bacteria. This chain is 3-deoxy-manno-octulosonate cytidylyltransferase, found in Agrobacterium fabrum (strain C58 / ATCC 33970) (Agrobacterium tumefaciens (strain C58)).